The sequence spans 209 residues: FMN-dependent NADH:quinone oxidoreductase (209 aa).

FMN is bound by residues Ser9 and 15–17; that span reads SNS.

It belongs to the azoreductase type 1 family. In terms of assembly, homodimer. The cofactor is FMN.

The enzyme catalyses 2 a quinone + NADH + H(+) = 2 a 1,4-benzosemiquinone + NAD(+). It carries out the reaction N,N-dimethyl-1,4-phenylenediamine + anthranilate + 2 NAD(+) = 2-(4-dimethylaminophenyl)diazenylbenzoate + 2 NADH + 2 H(+). Functionally, quinone reductase that provides resistance to thiol-specific stress caused by electrophilic quinones. In terms of biological role, also exhibits azoreductase activity. Catalyzes the reductive cleavage of the azo bond in aromatic azo compounds to the corresponding amines. This Bordetella parapertussis (strain 12822 / ATCC BAA-587 / NCTC 13253) protein is FMN-dependent NADH:quinone oxidoreductase.